Consider the following 161-residue polypeptide: Nucleotide-binding protein Rfer_2692 (161 aa).

Belongs to the YajQ family.

Nucleotide-binding protein. This is Nucleotide-binding protein Rfer_2692 from Albidiferax ferrireducens (strain ATCC BAA-621 / DSM 15236 / T118) (Rhodoferax ferrireducens).